The sequence spans 335 residues: Protease HtpX homolog (335 aa).

The next 3 helical transmembrane spans lie at Val9–Ala29, Leu42–Tyr62, and Ile64–Ile84. Residue His168 participates in Zn(2+) binding. Glu169 is an active-site residue. A Zn(2+)-binding site is contributed by His172. 2 consecutive transmembrane segments (helical) span residues Ala179–Leu199 and Ala213–Phe233. Glu238 is a binding site for Zn(2+).

The protein belongs to the peptidase M48B family. Zn(2+) is required as a cofactor.

It is found in the cell membrane. This chain is Protease HtpX homolog, found in Archaeoglobus fulgidus (strain ATCC 49558 / DSM 4304 / JCM 9628 / NBRC 100126 / VC-16).